The sequence spans 151 residues: Ribosome maturation factor RimP (151 aa).

This sequence belongs to the RimP family.

Its subcellular location is the cytoplasm. Its function is as follows. Required for maturation of 30S ribosomal subunits. The protein is Ribosome maturation factor RimP of Aliivibrio fischeri (strain ATCC 700601 / ES114) (Vibrio fischeri).